Consider the following 548-residue polypeptide: Sesquiterpene synthase 9 (548 aa).

The Mg(2+) site is built by aspartate 300, aspartate 304, and glutamate 453. A DDXXD motif motif is present at residues 300–304 (DDTFD).

It belongs to the terpene synthase family. Tpsa subfamily. The cofactor is Mg(2+). Mn(2+) serves as cofactor. Mostly expressed in stem and trichomes, to a lower extent in roots, leaves and flowers and, at low levels, in fruits.

It is found in the cytoplasm. The catalysed reaction is (2E,6E)-farnesyl diphosphate = germacrene C + diphosphate. The enzyme catalyses (2E)-geranyl diphosphate = terpinolene + diphosphate. It catalyses the reaction (2E)-geranyl diphosphate = limonene + diphosphate. It carries out the reaction (2E)-geranyl diphosphate = beta-myrcene + diphosphate. The catalysed reaction is (2Z,6Z)-farnesyl diphosphate = germacrene C + diphosphate. Its pathway is secondary metabolite biosynthesis; terpenoid biosynthesis. Its function is as follows. Involved in the biosynthesis of germacrene C, one of the most abundant sesquiterpene in the leaf oil of tomato. Produces mainly germacrene C, but also smaller amounts of germacrene A, B and D when used with farnesyl diphosphate (FPP) as substrate; able to use both (2E,6E)-farnesyl diphosphate ((EE)-FPP) and (2Z,6Z)-farnesyl diphosphate ((ZZ)-FPP). No or low activity with geranylgeranyl diphosphate (GGPP). Can act with a low efficiency as a monoterpene synthase with geranyl diphosphate (GPP) as substrate, thus producing beta-myrcene, limonene and terpinolene. This Solanum lycopersicum (Tomato) protein is Sesquiterpene synthase 9.